The following is a 304-amino-acid chain: Aspartate carbamoyltransferase catalytic subunit (304 aa).

Residues R53 and T54 each contribute to the carbamoyl phosphate site. K82 contacts L-aspartate. Residues R103, H131, and Q134 each coordinate carbamoyl phosphate. Positions 163 and 224 each coordinate L-aspartate. The carbamoyl phosphate site is built by L263 and P264.

Belongs to the aspartate/ornithine carbamoyltransferase superfamily. ATCase family. In terms of assembly, heterooligomer of catalytic and regulatory chains.

It carries out the reaction carbamoyl phosphate + L-aspartate = N-carbamoyl-L-aspartate + phosphate + H(+). Its pathway is pyrimidine metabolism; UMP biosynthesis via de novo pathway; (S)-dihydroorotate from bicarbonate: step 2/3. Catalyzes the condensation of carbamoyl phosphate and aspartate to form carbamoyl aspartate and inorganic phosphate, the committed step in the de novo pyrimidine nucleotide biosynthesis pathway. The protein is Aspartate carbamoyltransferase catalytic subunit of Haloarcula marismortui (strain ATCC 43049 / DSM 3752 / JCM 8966 / VKM B-1809) (Halobacterium marismortui).